The chain runs to 154 residues: Lymphocyte antigen 6K (154 aa).

Positions 1–20 (MAFLVALLVVLGLQLVQSNA) are cleaved as a signal peptide. The region spanning 21–117 (LTCHVCEAQN…NGEGPPTDQL (97 aa)) is the UPAR/Ly6 domain. Gly123 carries GPI-anchor amidated glycine lipidation. Positions 124 to 154 (KASGRRHRYIELLLTGFMVLTANGLSALCLL) are cleaved as a propeptide — removed in mature form.

Interacts with ADAM3 and TEX101. In terms of tissue distribution, strongly expressed in testes and weakly expressed in the epididymis, ovary, and uterus. Expressed in testicular germ cells (TGCs). Expressed in the testicular seminiferous tubules, in spermatocytes, spermatids, and testicular spermatozoa.

Its subcellular location is the secreted. It is found in the cytoplasm. The protein localises to the cell membrane. It localises to the cytoplasmic vesicle. The protein resides in the secretory vesicle. Its subcellular location is the acrosome. It is found in the membrane raft. In terms of biological role, required for sperm migration into the oviduct and male fertility by controlling binding of sperm to zona pellucida. May play a role in cell growth. This is Lymphocyte antigen 6K from Mus musculus (Mouse).